Reading from the N-terminus, the 89-residue chain is Small ribosomal subunit protein uS15 (89 aa).

It belongs to the universal ribosomal protein uS15 family. As to quaternary structure, part of the 30S ribosomal subunit. Forms a bridge to the 50S subunit in the 70S ribosome, contacting the 23S rRNA.

Its function is as follows. One of the primary rRNA binding proteins, it binds directly to 16S rRNA where it helps nucleate assembly of the platform of the 30S subunit by binding and bridging several RNA helices of the 16S rRNA. Functionally, forms an intersubunit bridge (bridge B4) with the 23S rRNA of the 50S subunit in the ribosome. The chain is Small ribosomal subunit protein uS15 from Staphylococcus saprophyticus subsp. saprophyticus (strain ATCC 15305 / DSM 20229 / NCIMB 8711 / NCTC 7292 / S-41).